The chain runs to 551 residues: DNA mismatch repair protein MutL (551 aa).

The protein belongs to the DNA mismatch repair MutL/HexB family.

This protein is involved in the repair of mismatches in DNA. It is required for dam-dependent methyl-directed DNA mismatch repair. May act as a 'molecular matchmaker', a protein that promotes the formation of a stable complex between two or more DNA-binding proteins in an ATP-dependent manner without itself being part of a final effector complex. The protein is DNA mismatch repair protein MutL of Thermosipho melanesiensis (strain DSM 12029 / CIP 104789 / BI429).